The primary structure comprises 138 residues: MSLAAVPHLTAGLQTFLAFDFGLQRTGVATGNVLTRTATPQATIAATGDARLKAIELRIREWQPDALVVGIPFHPDGASHENTRRAQKFSRQLRARFGLKVFEVDERYSTTEALAGGAADADAASACIILEQFLRSLP.

It belongs to the YqgF nuclease family.

The protein resides in the cytoplasm. In terms of biological role, could be a nuclease involved in processing of the 5'-end of pre-16S rRNA. This is Putative pre-16S rRNA nuclease from Polaromonas sp. (strain JS666 / ATCC BAA-500).